Here is a 391-residue protein sequence, read N- to C-terminus: 3-ketoacyl-CoA thiolase (391 aa).

Residue Cys95 is the Acyl-thioester intermediate of the active site. Active-site proton acceptor residues include His347 and Cys377.

This sequence belongs to the thiolase-like superfamily. Thiolase family. Heterotetramer of two alpha chains (FadB) and two beta chains (FadA).

Its subcellular location is the cytoplasm. It catalyses the reaction an acyl-CoA + acetyl-CoA = a 3-oxoacyl-CoA + CoA. Its pathway is lipid metabolism; fatty acid beta-oxidation. In terms of biological role, catalyzes the final step of fatty acid oxidation in which acetyl-CoA is released and the CoA ester of a fatty acid two carbons shorter is formed. In Pseudomonas fluorescens (strain ATCC BAA-477 / NRRL B-23932 / Pf-5), this protein is 3-ketoacyl-CoA thiolase.